The primary structure comprises 137 residues: MLQPKRTKFRKQFTGKNRGLAFSGGKVSFGEYALRAQDRGRLTARQIEAARRAMTRHIKRGGKIWIRVFPDVPVTKKPLEVRMGKGKGNVEYWVCKVQPGRILYEMEGVSEEIAREAFKLAAAKLPIKTQFVTRTVM.

This sequence belongs to the universal ribosomal protein uL16 family. As to quaternary structure, part of the 50S ribosomal subunit.

Functionally, binds 23S rRNA and is also seen to make contacts with the A and possibly P site tRNAs. The chain is Large ribosomal subunit protein uL16 from Thioalkalivibrio sulfidiphilus (strain HL-EbGR7).